A 152-amino-acid chain; its full sequence is Deoxyuridine 5'-triphosphate nucleotidohydrolase (152 aa).

Substrate-binding positions include 72–74, Asn-85, and 89–91; these read RSG and TID.

This sequence belongs to the dUTPase family. Requires Mg(2+) as cofactor.

It catalyses the reaction dUTP + H2O = dUMP + diphosphate + H(+). Its pathway is pyrimidine metabolism; dUMP biosynthesis; dUMP from dCTP (dUTP route): step 2/2. Its function is as follows. This enzyme is involved in nucleotide metabolism: it produces dUMP, the immediate precursor of thymidine nucleotides and it decreases the intracellular concentration of dUTP so that uracil cannot be incorporated into DNA. The chain is Deoxyuridine 5'-triphosphate nucleotidohydrolase from Rhodopseudomonas palustris (strain BisB18).